A 231-amino-acid chain; its full sequence is Uracil phosphoribosyltransferase (231 aa).

38–42 (KGLVR) contacts GTP. Residues Arg-87, Arg-112, and 140-148 (DPMIATGST) contribute to the 5-phospho-alpha-D-ribose 1-diphosphate site. Residues Ile-203 and 208–210 (GDA) each bind uracil. Asp-209 lines the 5-phospho-alpha-D-ribose 1-diphosphate pocket.

Belongs to the UPRTase family. It depends on Mg(2+) as a cofactor.

The enzyme catalyses UMP + diphosphate = 5-phospho-alpha-D-ribose 1-diphosphate + uracil. It participates in pyrimidine metabolism; UMP biosynthesis via salvage pathway; UMP from uracil: step 1/1. Its activity is regulated as follows. Allosterically activated by GTP. Catalyzes the conversion of uracil and 5-phospho-alpha-D-ribose 1-diphosphate (PRPP) to UMP and diphosphate. In Methanococcus maripaludis (strain C7 / ATCC BAA-1331), this protein is Uracil phosphoribosyltransferase.